The primary structure comprises 272 residues: Indole-3-glycerol phosphate synthase (272 aa).

This sequence belongs to the TrpC family.

It catalyses the reaction 1-(2-carboxyphenylamino)-1-deoxy-D-ribulose 5-phosphate + H(+) = (1S,2R)-1-C-(indol-3-yl)glycerol 3-phosphate + CO2 + H2O. Its pathway is amino-acid biosynthesis; L-tryptophan biosynthesis; L-tryptophan from chorismate: step 4/5. The polypeptide is Indole-3-glycerol phosphate synthase (Mycobacterium ulcerans (strain Agy99)).